The following is a 341-amino-acid chain: MHTDLDTDMDMDTETVALCSSSSRQASPLGTPTPEADTTLLKQKPEKLLAELDLSGPPPAPGVPRRRGSMPVPYKHQLRRAQAVDELDWPPQASPSGSSDSLGSGEAALTQKDGVFKVMLVGESGVGKSTLAGTFGGLQGDHAHEMENSEDTYERRIMVDKEEVTLIVYDIWEQGDAGGWLQDHCLQTGDAFLIVFSVTDRRGFSKVPETLLRLRAGRPHHDLPVILVGNKSDLARSREVSLEEGRHLAGTLSCKHIETSAALHHNTRELFEGAVRQIRLRRGRGHAGGQRPEPSSPDGPAPPTRRESLTKKAKRFLANLVPRNAKFFKQRSRSCHDLSVL.

Acidic residues predominate over residues 1-13; sequence MHTDLDTDMDMDT. Disordered stretches follow at residues 1-71 and 84-106; these read MHTD…GSMP and VDEL…GSGE. Residues 18–30 are compositionally biased toward polar residues; the sequence is LCSSSSRQASPLG. Serine 27 carries the phosphoserine modification. Residues 90–106 are compositionally biased toward low complexity; sequence PPQASPSGSSDSLGSGE. Residues 122 to 129, 230 to 233, and 261 to 262 each bind GTP; these read GESGVGKS, NKSD, and AA. Residues 282-309 form a disordered region; the sequence is RGRGHAGGQRPEPSSPDGPAPPTRRESL. The span at 294-303 shows a compositional bias: pro residues; the sequence is PSSPDGPAPP. Serine 296 carries the phosphoserine modification.

This sequence belongs to the small GTPase superfamily. RGK family.

Its subcellular location is the cell membrane. Binds GTP saturably and exhibits a low intrinsic rate of GTP hydrolysis. The protein is GTP-binding protein REM 2 (Rem2) of Mus musculus (Mouse).